Here is a 45-residue protein sequence, read N- to C-terminus: Large ribosomal subunit protein bL36 (45 aa).

Positions 1-20 are disordered; sequence MKVSSSIKADPSKGDKLVRR.

This sequence belongs to the bacterial ribosomal protein bL36 family.

In Chlamydia abortus (strain DSM 27085 / S26/3) (Chlamydophila abortus), this protein is Large ribosomal subunit protein bL36.